A 385-amino-acid polypeptide reads, in one-letter code: Beta sliding clamp (385 aa).

The protein belongs to the beta sliding clamp family. Forms a ring-shaped head-to-tail homodimer around DNA which binds and tethers DNA polymerases and other proteins to the DNA. The DNA replisome complex has a single clamp-loading complex (3 tau and 1 each of delta, delta', psi and chi subunits) which binds 3 Pol III cores (1 core on the leading strand and 2 on the lagging strand) each with a beta sliding clamp dimer. Additional proteins in the replisome are other copies of gamma, psi and chi, Ssb, DNA helicase and RNA primase.

It localises to the cytoplasm. Functionally, confers DNA tethering and processivity to DNA polymerases and other proteins. Acts as a clamp, forming a ring around DNA (a reaction catalyzed by the clamp-loading complex) which diffuses in an ATP-independent manner freely and bidirectionally along dsDNA. Initially characterized for its ability to contact the catalytic subunit of DNA polymerase III (Pol III), a complex, multichain enzyme responsible for most of the replicative synthesis in bacteria; Pol III exhibits 3'-5' exonuclease proofreading activity. The beta chain is required for initiation of replication as well as for processivity of DNA replication. The polypeptide is Beta sliding clamp (dnaN) (Borreliella burgdorferi (strain ATCC 35210 / DSM 4680 / CIP 102532 / B31) (Borrelia burgdorferi)).